A 607-amino-acid chain; its full sequence is Leucine-rich repeat-containing protein 63 (607 aa).

7 LRR repeats span residues Gln-357 to Leu-378, Asn-380 to Leu-401, Tyr-403 to Leu-424, Tyr-426 to Leu-447, Ser-449 to Leu-470, Asn-471 to Arg-497, and Leu-498 to Lys-524.

This Rattus norvegicus (Rat) protein is Leucine-rich repeat-containing protein 63 (Lrrc63).